A 628-amino-acid chain; its full sequence is Protein ETHYLENE INSENSITIVE 3 (628 aa).

Residues 38 to 68 (EDDYTDDEIDVDELERRMWRDKMRLKRLKEQ) adopt a coiled-coil conformation. Over residues 66 to 79 (KEQDKGKEGVDAAK) the composition is skewed to basic and acidic residues. The interval 66–92 (KEQDKGKEGVDAAKQRQSQEQARRKKM) is disordered. The segment at 174–306 (TPHTLQELQD…SLARELYPES (133 aa)) is DNA-binding domain.

It belongs to the EIN3 family. As to quaternary structure, acts as a homodimer to bind the primary ethylene response element. Interacts with TAF12B. Interacts with KIN10. Binds to ENAP1 in the presence of ethylene; this reaction facilitates its association with histone. Post-translationally, phosphorylated by KIN10.

It is found in the nucleus. With respect to regulation, activated by phosphorylation by MPK3 and MPK6. Down-regulated by KIN10 that controls its protein stability under a phosphorylation-dependent manner. Satnilitzed during hypoxia (e.g. submergences) via a ceramides-triggered and CTR1-dependent manner. In terms of biological role, transcription factor acting as a positive regulator in the ethylene response pathway, by promoting histone acetylation in an ENAP1-dependent manner, thus accelerating the expression of ethylene-responsive genes. Binds DNA. Is required for ethylene responsiveness in adult plant tissues. Binds a primary ethylene response element present in the ETHYLENE-RESPONSE-FACTOR1 promoter with consequence to activate the transcription of this gene. The protein is Protein ETHYLENE INSENSITIVE 3 of Arabidopsis thaliana (Mouse-ear cress).